Here is a 740-residue protein sequence, read N- to C-terminus: Alpha-1,6-mannosylglycoprotein 6-beta-N-acetylglucosaminyltransferase A (740 aa).

At 1–13 the chain is on the cytoplasmic side; that stretch reads MAFFSPWKLSSQK. Residues 14-30 traverse the membrane as a helical; Signal-anchor for type II membrane protein segment; that stretch reads LGFFLVTFGFIWGMMLL. Residues 31–740 are Lumenal-facing; the sequence is HFTIQQRTQP…GQVALCKDCL (710 aa). 3 N-linked (GlcNAc...) asparagine glycosylation sites follow: Asn109, Asn114, and Asn117. Intrachain disulfides connect Cys144/Cys182, Cys155/Cys195, Cys171/Cys337, Cys371/Cys625, Cys648/Cys723, Cys652/Cys725, Cys659/Cys712, Cys680/Cys701, and Cys736/Cys739. The segment at 212–740 is sufficient for catalytic activity; sequence NSLAEIRTDF…GQVALCKDCL (529 aa). An N-linked (GlcNAc...) asparagine glycan is attached at Asn333. 377–378 contributes to the substrate binding site; that stretch reads DS. N-linked (GlcNAc...) asparagine glycans are attached at residues Asn432 and Asn446. Residue Glu525 participates in UDP-N-acetyl-alpha-D-glucosamine binding. Lys553 is a substrate binding site.

Belongs to the glycosyltransferase 18 family. In terms of processing, N-glycosylated. Post-translationally, a secreted form is released from the membrane after cleavage by gamma-secretase. In terms of tissue distribution, detected in cerebellum.

It localises to the golgi apparatus membrane. It is found in the perikaryon. The protein resides in the secreted. The enzyme catalyses N(4)-{beta-D-GlcNAc-(1-&gt;2)-[beta-D-GlcNAc-(1-&gt;4)]-alpha-D-Man-(1-&gt;3)-[beta-D-GlcNAc-(1-&gt;2)-alpha-D-Man-(1-&gt;6)]-beta-D-Man-(1-&gt;4)-beta-D-GlcNAc-(1-&gt;4)-beta-D-GlcNAc}-L-asparaginyl-[protein] + UDP-N-acetyl-alpha-D-glucosamine = N(4)-{beta-D-GlcNAc-(1-&gt;2)-[beta-D-GlcNAc-(1-&gt;4)]-alpha-D-Man-(1-&gt;3)-[beta-D-GlcNAc-(1-&gt;2)-[beta-D-GlcNAc-(1-&gt;6)]-alpha-D-Man-(1-&gt;6)]-beta-D-Man-(1-&gt;4)-beta-D-GlcNAc-(1-&gt;4)-beta-D-GlcNAc}-L-asparaginyl-[protein] + UDP + H(+). It functions in the pathway protein modification; protein glycosylation. Its function is as follows. Catalyzes the addition of N-acetylglucosamine (GlcNAc) in beta 1-6 linkage to the alpha-linked mannose of biantennary N-linked oligosaccharides. Catalyzes an important step in the biosynthesis of branched, complex-type N-glycans, such as those found on EGFR, TGFR (TGF-beta receptor) and CDH2. Via its role in the biosynthesis of complex N-glycans, plays an important role in the activation of cellular signaling pathways, reorganization of the actin cytoskeleton, cell-cell adhesion and cell migration. MGAT5-dependent EGFR N-glycosylation enhances the interaction between EGFR and LGALS3 and thereby prevents rapid EGFR endocytosis and prolongs EGFR signaling. Required for efficient interaction between TGFB1 and its receptor. Enhances activation of intracellular signaling pathways by several types of growth factors, including FGF2, PDGF, IGF, TGFB1 and EGF. MGAT5-dependent CDH2 N-glycosylation inhibits CDH2-mediated homotypic cell-cell adhesion and contributes to the regulation of downstream signaling pathways. Promotes cell migration. Contributes to the regulation of the inflammatory response. MGAT5-dependent TCR N-glycosylation enhances the interaction between TCR and LGALS3, limits agonist-induced TCR clustering, and thereby dampens TCR-mediated responses to antigens. Required for normal leukocyte evasation and accumulation at sites of inflammation. Inhibits attachment of monocytes to the vascular endothelium and subsequent monocyte diapedesis. Promotes proliferation of umbilical vein endothelial cells and angiogenesis, at least in part by promoting the release of the growth factor FGF2 from the extracellular matrix. This Mus musculus (Mouse) protein is Alpha-1,6-mannosylglycoprotein 6-beta-N-acetylglucosaminyltransferase A (Mgat5).